We begin with the raw amino-acid sequence, 714 residues long: 2'-5'-oligoadenylate synthase 2 (714 aa).

A lipid anchor (N-myristoyl glycine) is attached at Gly-2. OAS domain stretches follow at residues 11 to 336 (KPSE…SWNV) and 344 to 683 (TPGH…WNVP). ATP is bound at residue Ser-397. Residues Asp-409 and Asp-480 each contribute to the Mg(2+) site. ATP contacts are provided by Arg-544 and Lys-547.

It belongs to the 2-5A synthase family. Homodimer. The cofactor is Mg(2+). In terms of processing, myristoylation is not essential for its activity. Glycosylated. Glycosylation is essential for its activity.

Its subcellular location is the cytoplasm. The protein localises to the perinuclear region. It carries out the reaction 3 ATP = 5'-triphosphoadenylyl-(2'-&gt;5')-adenylyl-(2'-&gt;5')-adenosine + 2 diphosphate. With respect to regulation, produced as a latent enzyme which is activated by double stranded RNA (dsRNA) generated during the course of viral infection. The dsRNA activator must be at least 15 nucleotides long, and no modification of the 2'-hydroxyl group is tolerated. ssRNA or dsDNA do not act as activators. Strongly inhibited by copper, iron and zinc ions. Partially inhibited by cobalt and nickel ions. Interferon-induced, dsRNA-activated antiviral enzyme which plays a critical role in cellular innate antiviral response. Activated by detection of double stranded RNA (dsRNA): polymerizes higher oligomers of 2'-5'-oligoadenylates (2-5A) from ATP which then bind to the inactive monomeric form of ribonuclease L (RNASEL) leading to its dimerization and subsequent activation. Activation of RNASEL leads to degradation of cellular as well as viral RNA, resulting in the inhibition of protein synthesis, thus terminating viral replication. Can mediate the antiviral effect via the classical RNASEL-dependent pathway or an alternative antiviral pathway independent of RNASEL. In addition, it may also play a role in other cellular processes such as apoptosis, cell growth, differentiation and gene regulation. May act as a negative regulator of lactation, stopping lactation in virally infected mammary gland lobules, thereby preventing transmission of viruses to neonates. Non-infected lobules would not be affected, allowing efficient pup feeding during infection. The protein is 2'-5'-oligoadenylate synthase 2 (OAS2) of Bos taurus (Bovine).